Reading from the N-terminus, the 949-residue chain is General transcription factor II-I repeat domain-containing protein 2A (949 aa).

2 GTF2I-like repeats span residues 98-192 (QVHS…QLGG) and 323-417 (LSSI…SNVG).

Belongs to the TFII-I family. In terms of tissue distribution, ubiquitous.

Its subcellular location is the nucleus. The sequence is that of General transcription factor II-I repeat domain-containing protein 2A (GTF2IRD2) from Homo sapiens (Human).